We begin with the raw amino-acid sequence, 407 residues long: Protein NIS1 (407 aa).

Residues 40–61 are compositionally biased toward low complexity; the sequence is TSNSNSNSNSNSNTNSNTNSNS. 2 disordered regions span residues 40-64 and 251-315; these read TSNS…SDTK and RSIR…KLNT. Phosphoserine occurs at positions 260 and 264. Residues 266-276 show a composition bias toward low complexity; that stretch reads PTTTPATATKT. The span at 277–302 shows a compositional bias: polar residues; the sequence is IKQNSTTPTTRSVYNKNVGRSNTSPS. A phosphoserine mark is found at S300 and S302. Positions 306–315 are enriched in basic residues; it reads HPKRRGKLNT. Positions 391-398 match the SUMO-binding motif; sequence IIIPDSQD.

In terms of assembly, interacts with CBF2, GIS1, NAP1, PRM8, REI1, SHS1 and SMT3.

The protein resides in the bud neck. It is found in the cytoplasm. It localises to the cell cortex. Its function is as follows. May be involved in a mitotic signaling network. Binds sumoylated proteins and may stabilize SUMO chains. The polypeptide is Protein NIS1 (NIS1) (Saccharomyces cerevisiae (strain YJM789) (Baker's yeast)).